A 204-amino-acid polypeptide reads, in one-letter code: Large ribosomal subunit protein uL4 (204 aa).

Positions 49 to 74 (AKKRGEVSGGGKKPWSQKGGGRARAG) are disordered. Over residues 55-71 (VSGGGKKPWSQKGGGRA) the composition is skewed to gly residues.

It belongs to the universal ribosomal protein uL4 family. Part of the 50S ribosomal subunit.

Its function is as follows. One of the primary rRNA binding proteins, this protein initially binds near the 5'-end of the 23S rRNA. It is important during the early stages of 50S assembly. It makes multiple contacts with different domains of the 23S rRNA in the assembled 50S subunit and ribosome. Forms part of the polypeptide exit tunnel. This Wolinella succinogenes (strain ATCC 29543 / DSM 1740 / CCUG 13145 / JCM 31913 / LMG 7466 / NCTC 11488 / FDC 602W) (Vibrio succinogenes) protein is Large ribosomal subunit protein uL4.